An 88-amino-acid polypeptide reads, in one-letter code: Putative defensin-like protein 256 (88 aa).

A signal peptide spans 1 to 25; it reads MKSSIFFKLLLLVSLLVVIFRQSYA. Disulfide bonds link C30-C46, C36-C53, and C40-C55.

It belongs to the DEFL family.

The protein resides in the secreted. The protein is Putative defensin-like protein 256 of Arabidopsis thaliana (Mouse-ear cress).